We begin with the raw amino-acid sequence, 40 residues long: uncharacterized protein (40 aa).

A signal peptide spans 1–27; it reads MFPADVILQCFGFSVGIALVGYVISLF.

This is an uncharacterized protein from Archaeoglobus fulgidus (strain ATCC 49558 / DSM 4304 / JCM 9628 / NBRC 100126 / VC-16).